Reading from the N-terminus, the 436-residue chain is Gamma-glutamyl phosphate reductase (436 aa).

Belongs to the gamma-glutamyl phosphate reductase family.

The protein resides in the cytoplasm. The enzyme catalyses L-glutamate 5-semialdehyde + phosphate + NADP(+) = L-glutamyl 5-phosphate + NADPH + H(+). The protein operates within amino-acid biosynthesis; L-proline biosynthesis; L-glutamate 5-semialdehyde from L-glutamate: step 2/2. Its function is as follows. Catalyzes the NADPH-dependent reduction of L-glutamate 5-phosphate into L-glutamate 5-semialdehyde and phosphate. The product spontaneously undergoes cyclization to form 1-pyrroline-5-carboxylate. The sequence is that of Gamma-glutamyl phosphate reductase from Prochlorococcus marinus (strain SARG / CCMP1375 / SS120).